Consider the following 97-residue polypeptide: HssA/B-like protein 44 (97 aa).

Disordered regions lie at residues 1-22 (MTLF…SSIA) and 62-97 (ASTS…CGCN). Over residues 72-84 (RPGRGHGGPHGHG) the composition is skewed to basic residues. Over residues 85–97 (RGGSGSGSSCGCN) the composition is skewed to gly residues.

The protein belongs to the hssA/B family.

This Dictyostelium discoideum (Social amoeba) protein is HssA/B-like protein 44 (hssl44).